A 444-amino-acid chain; its full sequence is Elongation factor 1-alpha (444 aa).

In terms of domain architecture, tr-type G spans 15-236 (KPHINLAVVG…VLDTFQPPPR (222 aa)). Positions 24 to 31 (GHVDNGKS) are G1. Residue 24-31 (GHVDNGKS) coordinates GTP. Position 31 (serine 31) interacts with Mg(2+). Positions 80-84 (GVTIE) are G2. The interval 101-104 (DLPG) is G3. GTP is bound by residues 101–105 (DLPGH) and 163–166 (NKMD). The segment at 163 to 166 (NKMD) is G4. Residues 202 to 204 (SAV) form a G5 region.

This sequence belongs to the TRAFAC class translation factor GTPase superfamily. Classic translation factor GTPase family. EF-Tu/EF-1A subfamily.

Its subcellular location is the cytoplasm. The catalysed reaction is GTP + H2O = GDP + phosphate + H(+). Functionally, GTP hydrolase that promotes the GTP-dependent binding of aminoacyl-tRNA to the A-site of ribosomes during protein biosynthesis. The polypeptide is Elongation factor 1-alpha (Pyrobaculum arsenaticum (strain DSM 13514 / JCM 11321 / PZ6)).